Reading from the N-terminus, the 478-residue chain is Ankyrin repeat and BTB/POZ domain-containing protein 1 (478 aa).

ANK repeat units follow at residues 1–31 (MDTS…EVNV) and 35–64 (WDST…RCEA). BTB domains lie at 115-182 (SDVV…DIGV) and 272-346 (PDIC…ELPP). Residues 451 to 477 (VQTYSAIEEAQQRLRALEDLLVSIGLD) are a coiled coil.

The protein resides in the cytoplasm. Its function is as follows. May act as a mediator of the PTEN growth-suppressive signaling pathway. May play a role in developmental processes. In Mus musculus (Mouse), this protein is Ankyrin repeat and BTB/POZ domain-containing protein 1.